We begin with the raw amino-acid sequence, 226 residues long: Cytidylate kinase (226 aa).

10–18 is an ATP binding site; it reads GPASSGKST.

The protein belongs to the cytidylate kinase family. Type 1 subfamily.

The protein localises to the cytoplasm. The catalysed reaction is CMP + ATP = CDP + ADP. It carries out the reaction dCMP + ATP = dCDP + ADP. The chain is Cytidylate kinase from Streptococcus pyogenes serotype M1.